Reading from the N-terminus, the 513-residue chain is GMP synthase [glutamine-hydrolyzing] (513 aa).

In terms of domain architecture, Glutamine amidotransferase type-1 spans 7 to 198 (LIVVVDFGGQ…LFNIAGCRGD (192 aa)). The Nucleophile role is filled by Cys-84. Catalysis depends on residues His-172 and Glu-174. The region spanning 199-388 (WTTESFITRQ…LGVPEEIVGR (190 aa)) is the GMPS ATP-PPase domain. 226 to 232 (SGGVDSS) contributes to the ATP binding site.

Homodimer.

The enzyme catalyses XMP + L-glutamine + ATP + H2O = GMP + L-glutamate + AMP + diphosphate + 2 H(+). Its pathway is purine metabolism; GMP biosynthesis; GMP from XMP (L-Gln route): step 1/1. Its function is as follows. Catalyzes the synthesis of GMP from XMP. In Symbiobacterium thermophilum (strain DSM 24528 / JCM 14929 / IAM 14863 / T), this protein is GMP synthase [glutamine-hydrolyzing].